We begin with the raw amino-acid sequence, 551 residues long: ATP-dependent RNA helicase MRH4, mitochondrial (551 aa).

The N-terminal 13 residues, 1–13, are a transit peptide targeting the mitochondrion; the sequence is MPPNLTPRSFNRD. The Q motif motif lies at 43–73; the sequence is RTFDDFGLEEGLVKSLKGLYGEDGKTTPIET. Residues 85–293 enclose the Helicase ATP-binding domain; sequence ASAPIGSQRV…TTNPFFTKKE (209 aa). ATP is bound at residue 98–105; sequence AETGSGKT. Residues 242–245 carry the DEAD box motif; it reads DEAD. The region spanning 334 to 551 is the Helicase C-terminal domain; that stretch reads TLAEDAKAAK…VGAMGKRVRT (218 aa). A disordered region spans residues 504 to 527; the sequence is LGEGAKNNKGGKGQGPLKKDGKTA.

It belongs to the DEAD box helicase family. MRH4 subfamily.

It localises to the mitochondrion. The catalysed reaction is ATP + H2O = ADP + phosphate + H(+). ATP-binding RNA helicase involved in mitochondrial RNA metabolism. Required for maintenance of mitochondrial DNA. This chain is ATP-dependent RNA helicase MRH4, mitochondrial (MRH4), found in Cryptococcus neoformans var. neoformans serotype D (strain B-3501A) (Filobasidiella neoformans).